The chain runs to 86 residues: Small ribosomal subunit protein uS15 (86 aa).

The protein belongs to the universal ribosomal protein uS15 family. In terms of assembly, part of the 30S ribosomal subunit. Forms a bridge to the 50S subunit in the 70S ribosome, contacting the 23S rRNA.

One of the primary rRNA binding proteins, it binds directly to 16S rRNA where it helps nucleate assembly of the platform of the 30S subunit by binding and bridging several RNA helices of the 16S rRNA. Its function is as follows. Forms an intersubunit bridge (bridge B4) with the 23S rRNA of the 50S subunit in the ribosome. The protein is Small ribosomal subunit protein uS15 of Ruthia magnifica subsp. Calyptogena magnifica.